Reading from the N-terminus, the 288-residue chain is Probable prolyl 4-hydroxylase 6 (288 aa).

Topologically, residues 1–4 (MDSQ) are cytoplasmic. Residues 5–27 (YFLAFSLSLLLIFSQISSFSFSV) traverse the membrane as a helical; Signal-anchor for type II membrane protein segment. Topologically, residues 28 to 288 (DPTRITQLSW…GFCRKSCKAC (261 aa)) are lumenal. The Fe2OG dioxygenase domain maps to 116–238 (NGEALQILHY…KWSATRWIHV (123 aa)). 2 residues coordinate Fe cation: H134 and D136. N-linked (GlcNAc...) asparagine glycosylation is found at N160 and N210. H219 contributes to the Fe cation binding site. K229 serves as a coordination point for 2-oxoglutarate. The 41-residue stretch at 248–288 (CVDDHESCQEWADAGECEKNPMYMVGSETSLGFCRKSCKAC) folds into the ShKT domain. 3 cysteine pairs are disulfide-bonded: C248-C288, C255-C281, and C264-C285.

This sequence belongs to the P4HA family. The cofactor is Fe(2+). It depends on L-ascorbate as a cofactor.

It localises to the endoplasmic reticulum membrane. The catalysed reaction is L-prolyl-[collagen] + 2-oxoglutarate + O2 = trans-4-hydroxy-L-prolyl-[collagen] + succinate + CO2. Its function is as follows. Catalyzes the post-translational formation of 4-hydroxyproline in -Xaa-Pro-Gly- sequences in proline-rich peptide sequences of plant glycoproteins and other proteins. Hydroxyprolines are important constituent of many plant cell wall glycoproteins such as extensins, hydroxyproline-rich glycoproteins, lectins and arabinogalactan proteins. This chain is Probable prolyl 4-hydroxylase 6, found in Arabidopsis thaliana (Mouse-ear cress).